We begin with the raw amino-acid sequence, 428 residues long: Serine--tRNA ligase (428 aa).

235-237 (TAE) contacts L-serine. 266–268 (RSE) contacts ATP. Glu-289 provides a ligand contact to L-serine. Residue 353 to 356 (EISS) participates in ATP binding. Ser-389 contributes to the L-serine binding site.

Belongs to the class-II aminoacyl-tRNA synthetase family. Type-1 seryl-tRNA synthetase subfamily. As to quaternary structure, homodimer. The tRNA molecule binds across the dimer.

The protein resides in the cytoplasm. The enzyme catalyses tRNA(Ser) + L-serine + ATP = L-seryl-tRNA(Ser) + AMP + diphosphate + H(+). The catalysed reaction is tRNA(Sec) + L-serine + ATP = L-seryl-tRNA(Sec) + AMP + diphosphate + H(+). It functions in the pathway aminoacyl-tRNA biosynthesis; selenocysteinyl-tRNA(Sec) biosynthesis; L-seryl-tRNA(Sec) from L-serine and tRNA(Sec): step 1/1. Functionally, catalyzes the attachment of serine to tRNA(Ser). Is also able to aminoacylate tRNA(Sec) with serine, to form the misacylated tRNA L-seryl-tRNA(Sec), which will be further converted into selenocysteinyl-tRNA(Sec). The protein is Serine--tRNA ligase of Shewanella pealeana (strain ATCC 700345 / ANG-SQ1).